Consider the following 750-residue polypeptide: MKKNNVNNITETLNSSSSSSSSSGSSSDEEVKSKLNFNQTDEMLKKIKENKFDWALFKRFIKIVIILYEKPVIPLLLFLLLFGSGVSQTYISKFTGILLSNIYGSLTSGDKFLFVSSLIKGCFAIGGSALFDAIIKFIVSIMAWNWRKTLCLYIQNVYFKKSLFYKILAFDDRIDNPDQRITSDIDNFTTLLSSIVSQCITGPMVVVYYTYLCYTTIDWYAPLIVYGYFFLGYFINKLVMSPMVSINYLQDKLEGDFRYLHQRIRNFSESIALYNLSKEKQQKKSTTSVDNLDYYDDDHHYHHHHDDGEESDEYTDKTKIINRKNKNSKNKRSALLKRSNKNIKNEELLVEEEQAKQQFEALLKNKKRVIFWQFGLNTTSDMFTFFSPLINYFIISIPVFFLSSKAALEPAQVTVQSYNCIMLASGFSQYINVSQSISDLSGYISRISTMIEVCKKVMGDTSLDIEITKLNEKDKTKSLPNSLIINNRDTSINTDFRHISLNEGESITLDDVTYFTPKGTQLYEKISICIKKGNNLLIMGPSGSGKSSLIRIINGLWPFFKGSINRPENEDMFFLPQQPYLIFGTLEEQILYPFSKKQKRIPKSIMRELFQRFDIDYLLDRERFIKKSAQVNDLTHNWLNQLSPGEQQLIAIIRLIYHKPKFALMDESTSSIPQSLEERVYSVAKELGITIISVGHRISLLKYHSTLLRFDKDKNWYLEDIINQNNQSNNINTINIDNNTNKIAEDSVFD.

The segment covering 1-14 has biased composition (polar residues); it reads MKKNNVNNITETLN. Positions 1–32 are disordered; the sequence is MKKNNVNNITETLNSSSSSSSSSGSSSDEEVK. Residues 15 to 26 show a composition bias toward low complexity; that stretch reads SSSSSSSSSGSS. Transmembrane regions (helical) follow at residues 63–83, 123–143, 188–208, and 215–235; these read IVII…LLFG, FAIG…SIMA, FTTL…VVVY, and TTID…GYFI. In terms of domain architecture, ABC transmembrane type-1 spans 74–362; the sequence is PLLLFLLLFG…EQAKQQFEAL (289 aa). Residues 334 to 370 are a coiled coil; sequence ALLKRSNKNIKNEELLVEEEQAKQQFEALLKNKKRVI. The helical transmembrane segment at 382–402 threads the bilayer; sequence MFTFFSPLINYFIISIPVFFL. One can recognise an ABC transporter domain in the interval 507–737; it reads ITLDDVTYFT…SNNINTINID (231 aa). 540 to 547 is an ATP binding site; that stretch reads GPSGSGKS.

The protein belongs to the ABC transporter superfamily. ABCD family. Peroxisomal fatty acyl CoA transporter (TC 3.A.1.203) subfamily.

The protein resides in the membrane. The protein is ABC transporter D family member 3 (abcD3) of Dictyostelium discoideum (Social amoeba).